The primary structure comprises 168 residues: uncharacterized protein (168 aa).

2 consecutive CBS domains span residues 20–77 (IMKK…NEDL) and 117–168 (MTRK…EALI).

This is an uncharacterized protein from Methanocaldococcus jannaschii (strain ATCC 43067 / DSM 2661 / JAL-1 / JCM 10045 / NBRC 100440) (Methanococcus jannaschii).